The sequence spans 267 residues: 4-hydroxy-tetrahydrodipicolinate reductase (267 aa).

NAD(+)-binding positions include 8–13 (GIAGRM), Glu-34, 98–100 (GST), and 122–125 (SPNM). His-155 functions as the Proton donor/acceptor in the catalytic mechanism. Residue His-156 coordinates (S)-2,3,4,5-tetrahydrodipicolinate. Lys-159 functions as the Proton donor in the catalytic mechanism. 165–166 (GT) serves as a coordination point for (S)-2,3,4,5-tetrahydrodipicolinate.

Belongs to the DapB family.

The protein localises to the cytoplasm. It carries out the reaction (S)-2,3,4,5-tetrahydrodipicolinate + NAD(+) + H2O = (2S,4S)-4-hydroxy-2,3,4,5-tetrahydrodipicolinate + NADH + H(+). The catalysed reaction is (S)-2,3,4,5-tetrahydrodipicolinate + NADP(+) + H2O = (2S,4S)-4-hydroxy-2,3,4,5-tetrahydrodipicolinate + NADPH + H(+). It participates in amino-acid biosynthesis; L-lysine biosynthesis via DAP pathway; (S)-tetrahydrodipicolinate from L-aspartate: step 4/4. Its function is as follows. Catalyzes the conversion of 4-hydroxy-tetrahydrodipicolinate (HTPA) to tetrahydrodipicolinate. The sequence is that of 4-hydroxy-tetrahydrodipicolinate reductase from Syntrophobacter fumaroxidans (strain DSM 10017 / MPOB).